The primary structure comprises 283 residues: 4-diphosphocytidyl-2-C-methyl-D-erythritol kinase (283 aa).

Lysine 10 is a catalytic residue. 95 to 105 (PVAAGLGGGSS) contacts ATP. Aspartate 137 is an active-site residue.

It belongs to the GHMP kinase family. IspE subfamily.

It carries out the reaction 4-CDP-2-C-methyl-D-erythritol + ATP = 4-CDP-2-C-methyl-D-erythritol 2-phosphate + ADP + H(+). Its pathway is isoprenoid biosynthesis; isopentenyl diphosphate biosynthesis via DXP pathway; isopentenyl diphosphate from 1-deoxy-D-xylulose 5-phosphate: step 3/6. In terms of biological role, catalyzes the phosphorylation of the position 2 hydroxy group of 4-diphosphocytidyl-2C-methyl-D-erythritol. The protein is 4-diphosphocytidyl-2-C-methyl-D-erythritol kinase of Pediococcus pentosaceus (strain ATCC 25745 / CCUG 21536 / LMG 10740 / 183-1w).